The sequence spans 276 residues: MGIIVYKPTSPGRRNASVLNYKEIITKTEPEKSLVFTEKKWAGRNNQGRITVRHRGGGHKKKIRIVDFKRDKDGIPAKVEAIEYDPNRTAFLALLCYADGERRYILAPEGLKVGDTVMSGPDADIKVGNALPLKYIPVGTMIHNIELYPGRGGQLVKSAGAVAQLMAKEGKYALIRLPSGELRYVSQECRATIGQVGNLDHENVRIGKAGRKRWMGIRPTVRGSAMNPVDHPHGGGEGKAPIGHPGPLTPWGKPTLGYKTRKKNKPSDKFIVKRRK.

The interval Gly-223–Lys-276 is disordered. The segment covering Lys-265–Lys-276 has biased composition (basic and acidic residues).

Belongs to the universal ribosomal protein uL2 family. In terms of assembly, part of the 50S ribosomal subunit. Forms a bridge to the 30S subunit in the 70S ribosome.

In terms of biological role, one of the primary rRNA binding proteins. Required for association of the 30S and 50S subunits to form the 70S ribosome, for tRNA binding and peptide bond formation. It has been suggested to have peptidyltransferase activity; this is somewhat controversial. Makes several contacts with the 16S rRNA in the 70S ribosome. The sequence is that of Large ribosomal subunit protein uL2 from Caldicellulosiruptor saccharolyticus (strain ATCC 43494 / DSM 8903 / Tp8T 6331).